The sequence spans 302 residues: MIALLIALFAAIHAPAVRSHGYLSVPTARQYKCFKDGNFYWPDNGDNIPDAACRNAYKSVYYKYRALDLESGAAASTAQYMFQQYMEYAAVAGPNYDDFDLIKQRVVPHTLCGAGSNDRNSVFGDKSGMDEPFNNWRPNTLYLNRYQPVYQMNVHFCPTAIHEPSYFEVFITKSNWDRRNPITWNELEYIGGNDSNLIPNPGDSLCDNSLVYSIPVVIPYRSNQFVMYVRWQRIDPVGEGFYNCADLVFETLDDECRYAQMAKVVRSQLQKHKLDARIDHNDEESCWRARKSNYSSFFNPGF.

An N-terminal signal peptide occupies residues 1-19 (MIALLIALFAAIHAPAVRS). N-linked (GlcNAc...) asparagine; by host glycans are attached at residues Asn193 and Asn293.

In terms of assembly, homodimer; disulfide-linked.

Its subcellular location is the host membrane. Component of the virus occlusion bodies, which are large proteinaceous structures (polyhedra), that protect the virus from the outside environment for extended periods until they are ingested by insect larvae. In Autographa californica nuclear polyhedrosis virus (AcMNPV), this protein is Spheroidin-like protein (SLP).